A 141-amino-acid polypeptide reads, in one-letter code: Putative nickel-responsive regulator (141 aa).

Residues His-80, His-91, His-93, and Cys-99 each coordinate Ni(2+).

It belongs to the transcriptional regulatory CopG/NikR family. It depends on Ni(2+) as a cofactor.

In terms of biological role, transcriptional regulator. The sequence is that of Putative nickel-responsive regulator from Methanococcus maripaludis (strain C7 / ATCC BAA-1331).